A 195-amino-acid chain; its full sequence is Probable chorismate pyruvate-lyase (195 aa).

Substrate is bound by residues R79, L117, and E180.

Belongs to the UbiC family.

Its subcellular location is the cytoplasm. The catalysed reaction is chorismate = 4-hydroxybenzoate + pyruvate. It participates in cofactor biosynthesis; ubiquinone biosynthesis. In terms of biological role, removes the pyruvyl group from chorismate, with concomitant aromatization of the ring, to provide 4-hydroxybenzoate (4HB) for the ubiquinone pathway. The sequence is that of Probable chorismate pyruvate-lyase from Ralstonia nicotianae (strain ATCC BAA-1114 / GMI1000) (Ralstonia solanacearum).